The primary structure comprises 515 residues: Maturase K (515 aa).

It belongs to the intron maturase 2 family. MatK subfamily.

The protein resides in the plastid. The protein localises to the chloroplast. Its function is as follows. Usually encoded in the trnK tRNA gene intron. Probably assists in splicing its own and other chloroplast group II introns. This chain is Maturase K, found in Pinus patula (Mexican weeping pine).